The chain runs to 127 residues: Transthyretin (127 aa).

Residue cysteine 10 is modified to Sulfocysteine. Lysine 15 is an L-thyroxine binding site. Glutamate 42 bears the 4-carboxyglutamate mark. Glutamate 54 contributes to the L-thyroxine binding site. N-linked (GlcNAc...) asparagine glycosylation occurs at asparagine 98. Position 117 (serine 117) interacts with L-thyroxine.

Belongs to the transthyretin family. Homotetramer. Dimer of dimers. In the homotetramer, subunits assemble around a central channel that can accommodate two ligand molecules. Interacts with RBP4. Post-translationally, sulfonation of the reactive cysteine Cys-10 enhances the stability of the native conformation of TTR, avoiding misassembly of the protein leading to amyloid formation. In terms of tissue distribution, detected in serum (at protein level).

The protein resides in the secreted. Thyroid hormone-binding protein. Probably transports thyroxine from the bloodstream to the brain. The polypeptide is Transthyretin (TTR) (Oryctolagus cuniculus (Rabbit)).